The sequence spans 134 residues: Histone H2A (134 aa).

The span at 1–11 shows a compositional bias: gly residues; it reads MTGGGKSGGKA. The interval 1 to 24 is disordered; the sequence is MTGGGKSGGKASGSKNAQSRSSKA. An N6-acetyllysine mark is found at K6 and K10. The residue at position 107 (Q107) is an N5-methylglutamine.

The protein belongs to the histone H2A family. In terms of assembly, the nucleosome is a histone octamer containing two molecules each of H2A, H2B, H3 and H4 assembled in one H3-H4 heterotetramer and two H2A-H2B heterodimers. The octamer wraps approximately 147 bp of DNA. In terms of processing, acetylated by ESA1 to form H2AK4ac and H2AK7ac.

The protein resides in the nucleus. It localises to the chromosome. Functionally, core component of nucleosome. Nucleosomes wrap and compact DNA into chromatin, limiting DNA accessibility to the cellular machineries which require DNA as a template. Histones thereby play a central role in transcription regulation, DNA repair, DNA replication and chromosomal stability. DNA accessibility is regulated via a complex set of post-translational modifications of histones, also called histone code, and nucleosome remodeling. The sequence is that of Histone H2A (HTA1) from Gibberella zeae (strain ATCC MYA-4620 / CBS 123657 / FGSC 9075 / NRRL 31084 / PH-1) (Wheat head blight fungus).